A 282-amino-acid chain; its full sequence is Formamidopyrimidine-DNA glycosylase (282 aa).

The Schiff-base intermediate with DNA role is filled by proline 2. Glutamate 3 serves as the catalytic Proton donor. The active-site Proton donor; for beta-elimination activity is the lysine 60. 3 residues coordinate DNA: histidine 99, arginine 118, and lysine 163. Residues 248-282 (WVYRRSGKNCKKCGEKILREKICGRSTHWCPNCQK) form an FPG-type zinc finger. Arginine 272 serves as the catalytic Proton donor; for delta-elimination activity.

Belongs to the FPG family. In terms of assembly, monomer. Requires Zn(2+) as cofactor.

It catalyses the reaction Hydrolysis of DNA containing ring-opened 7-methylguanine residues, releasing 2,6-diamino-4-hydroxy-5-(N-methyl)formamidopyrimidine.. It carries out the reaction 2'-deoxyribonucleotide-(2'-deoxyribose 5'-phosphate)-2'-deoxyribonucleotide-DNA = a 3'-end 2'-deoxyribonucleotide-(2,3-dehydro-2,3-deoxyribose 5'-phosphate)-DNA + a 5'-end 5'-phospho-2'-deoxyribonucleoside-DNA + H(+). Involved in base excision repair of DNA damaged by oxidation or by mutagenic agents. Acts as a DNA glycosylase that recognizes and removes damaged bases. Has a preference for oxidized purines, such as 7,8-dihydro-8-oxoguanine (8-oxoG). Has AP (apurinic/apyrimidinic) lyase activity and introduces nicks in the DNA strand. Cleaves the DNA backbone by beta-delta elimination to generate a single-strand break at the site of the removed base with both 3'- and 5'-phosphates. This chain is Formamidopyrimidine-DNA glycosylase, found in Prochlorococcus marinus (strain NATL2A).